A 62-amino-acid polypeptide reads, in one-letter code: UPF0434 protein RL4569 (62 aa).

This sequence belongs to the UPF0434 family.

This chain is UPF0434 protein RL4569, found in Rhizobium johnstonii (strain DSM 114642 / LMG 32736 / 3841) (Rhizobium leguminosarum bv. viciae).